Consider the following 280-residue polypeptide: Protein FLOURY 1-like (280 aa).

The helical transmembrane segment at 22 to 42 (GFGFGIFVIGCSSQFFNLVFL) threads the bilayer. The segment at 153-187 (VALSETELDEKNHHGEEEESEDEEESQSQNDEDQL) is disordered. The segment covering 169-187 (EEESEDEEESQSQNDEDQL) has biased composition (acidic residues). Residues 188-280 (LDVITLRTMV…LDDDEDKIQM (93 aa)) form the GTD-binding domain.

The protein localises to the membrane. The protein is Protein FLOURY 1-like of Arabidopsis thaliana (Mouse-ear cress).